The primary structure comprises 490 residues: Betaine aldehyde dehydrogenase (490 aa).

Asn93 lines the K(+) pocket. Residue 150-152 coordinates NAD(+); sequence GAW. The active-site Charge relay system is Lys162. Position 176-179 (176-179) interacts with NAD(+); sequence KPSE. Val180 contributes to the K(+) binding site. 230–233 contacts NAD(+); that stretch reads GTAT. Leu246 lines the K(+) pocket. Glu252 acts as the Proton acceptor in catalysis. Residues Gly254, Cys286, and Glu387 each coordinate NAD(+). The active-site Nucleophile is Cys286. Residue Cys286 is modified to Cysteine sulfenic acid (-SOH). Residues Lys457 and Gly460 each coordinate K(+). The Charge relay system role is filled by Glu464.

It belongs to the aldehyde dehydrogenase family. Dimer of dimers. It depends on K(+) as a cofactor.

It catalyses the reaction betaine aldehyde + NAD(+) + H2O = glycine betaine + NADH + 2 H(+). It participates in amine and polyamine biosynthesis; betaine biosynthesis via choline pathway; betaine from betaine aldehyde: step 1/1. Functionally, involved in the biosynthesis of the osmoprotectant glycine betaine. Catalyzes the irreversible oxidation of betaine aldehyde to the corresponding acid. The polypeptide is Betaine aldehyde dehydrogenase (Xanthomonas campestris pv. campestris (strain ATCC 33913 / DSM 3586 / NCPPB 528 / LMG 568 / P 25)).